The following is a 94-amino-acid chain: Putative toxin RelE4 (94 aa).

This sequence belongs to the RelE toxin family.

In terms of biological role, toxic component of a type II toxin-antitoxin (TA) system. Its cognate antitoxin is RelB4 (Potential). In Methanocaldococcus jannaschii (strain ATCC 43067 / DSM 2661 / JAL-1 / JCM 10045 / NBRC 100440) (Methanococcus jannaschii), this protein is Putative toxin RelE4 (relE4).